Reading from the N-terminus, the 274-residue chain is Nickel/cobalt efflux system RcnA (274 aa).

Over 1–12 the chain is Periplasmic; sequence MTEFTTLLQQGN. A helical membrane pass occupies residues 13–33; it reads AWFFIPSAILLGALHGLEPGH. The Cytoplasmic segment spans residues 34–56; that stretch reads SKTMMAAFIIAIKGTIKQAVMLG. The chain crosses the membrane as a helical span at residues 57–77; sequence LAATISHTAVVWLIAFGGMVI. Topologically, residues 78-86 are periplasmic; it reads SKRFTAQSA. Residues 87 to 107 traverse the membrane as a helical segment; that stretch reads EPWLQLISAVIIISTAFWMFW. Residues 108 to 175 lie on the Cytoplasmic side of the membrane; sequence RTWRGERNWL…DGREVTNWQI (68 aa). The segment at 127–153 is disordered; the sequence is HHHHDHEHHHDHGHHHHHEHGEYQDAH. A compositionally biased stretch (basic residues) spans 129-144; it reads HHDHEHHHDHGHHHHH. A helical transmembrane segment spans residues 176 to 196; sequence LLFGLTGGLIPCPAAITVLLI. Over 197–209 the chain is Periplasmic; it reads CIQLKALTLGATL. The helical transmembrane segment at 210-230 threads the bilayer; it reads VVSFSIGLALTLVTVGVGAAI. At 231–251 the chain is on the cytoplasmic side; it reads SVQQVAKRWSGFNTLAKRAPY. Residues 252–272 traverse the membrane as a helical segment; that stretch reads FSSLLIGLVGVYMGVHGFMGI. Over 273 to 274 the chain is Periplasmic; the sequence is MR.

The protein belongs to the NiCoT transporter (TC 2.A.52) family. RcnA subfamily.

It is found in the cell inner membrane. Efflux system for nickel and cobalt. The polypeptide is Nickel/cobalt efflux system RcnA (rcnA) (Escherichia coli (strain K12)).